The sequence spans 738 residues: Phosphoribosylformylglycinamidine synthase subunit PurL (738 aa).

His41 is an active-site residue. ATP is bound by residues Tyr44 and Lys83. Position 85 (Glu85) interacts with Mg(2+). Substrate-binding positions include 86–89 (SHNH) and Arg108. The Proton acceptor role is filled by His87. Residue Asp109 coordinates Mg(2+). Position 233 (Gln233) interacts with substrate. Asp261 is a Mg(2+) binding site. 305 to 307 (ESQ) provides a ligand contact to substrate. Positions 490 and 527 each coordinate ATP. Mg(2+) is bound at residue Asn528. Ser530 contributes to the substrate binding site.

This sequence belongs to the FGAMS family. In terms of assembly, monomer. Part of the FGAM synthase complex composed of 1 PurL, 1 PurQ and 2 PurS subunits.

The protein resides in the cytoplasm. The enzyme catalyses N(2)-formyl-N(1)-(5-phospho-beta-D-ribosyl)glycinamide + L-glutamine + ATP + H2O = 2-formamido-N(1)-(5-O-phospho-beta-D-ribosyl)acetamidine + L-glutamate + ADP + phosphate + H(+). It participates in purine metabolism; IMP biosynthesis via de novo pathway; 5-amino-1-(5-phospho-D-ribosyl)imidazole from N(2)-formyl-N(1)-(5-phospho-D-ribosyl)glycinamide: step 1/2. In terms of biological role, part of the phosphoribosylformylglycinamidine synthase complex involved in the purines biosynthetic pathway. Catalyzes the ATP-dependent conversion of formylglycinamide ribonucleotide (FGAR) and glutamine to yield formylglycinamidine ribonucleotide (FGAM) and glutamate. The FGAM synthase complex is composed of three subunits. PurQ produces an ammonia molecule by converting glutamine to glutamate. PurL transfers the ammonia molecule to FGAR to form FGAM in an ATP-dependent manner. PurS interacts with PurQ and PurL and is thought to assist in the transfer of the ammonia molecule from PurQ to PurL. This Alkaliphilus metalliredigens (strain QYMF) protein is Phosphoribosylformylglycinamidine synthase subunit PurL.